Here is a 299-residue protein sequence, read N- to C-terminus: Probable lipid kinase YegS (299 aa).

Residues 2–133 (AEFPASLLIL…IDMAQVNKQT (132 aa)) enclose the DAGKc domain. ATP-binding positions include threonine 40, 66-72 (GDGTINE), and threonine 95. 3 residues coordinate Mg(2+): leucine 215, aspartate 218, and leucine 220. Glutamate 271 functions as the Proton acceptor in the catalytic mechanism.

The protein belongs to the diacylglycerol/lipid kinase family. YegS lipid kinase subfamily. Requires Mg(2+) as cofactor. The cofactor is Ca(2+).

The protein resides in the cytoplasm. Its function is as follows. Probably phosphorylates lipids; the in vivo substrate is unknown. The polypeptide is Probable lipid kinase YegS (Escherichia coli O45:K1 (strain S88 / ExPEC)).